The sequence spans 737 residues: Ribosome-releasing factor 2, mitochondrial (737 aa).

The transit peptide at 1-29 directs the protein to the mitochondrion; sequence MLKYALHSGGMPRNRLLRQLSAYIFRRSY. The region spanning 31-310 is the tr-type G domain; that stretch reads SNIRNIGILA…AVNTYLPAPE (280 aa). Residues 40–47, 104–108, and 158–161 contribute to the GTP site; these read AHIDAGKT, DTPGH, and NKMD.

The protein belongs to the TRAFAC class translation factor GTPase superfamily. Classic translation factor GTPase family. EF-G/EF-2 subfamily.

It localises to the mitochondrion. Its function is as follows. Mitochondrial GTPase that mediates the disassembly of ribosomes from messenger RNA at the termination of mitochondrial protein biosynthesis. Not involved in the GTP-dependent ribosomal translocation step during translation elongation. The sequence is that of Ribosome-releasing factor 2, mitochondrial from Drosophila persimilis (Fruit fly).